A 209-amino-acid chain; its full sequence is Molybdenum cofactor guanylyltransferase (209 aa).

GTP is bound by residues 13-15 (LAG), Lys26, Asn54, Asp74, and Asp104. Asp104 provides a ligand contact to Mg(2+).

It belongs to the MobA family. As to quaternary structure, monomer. Mg(2+) serves as cofactor.

The protein resides in the cytoplasm. The enzyme catalyses Mo-molybdopterin + GTP + H(+) = Mo-molybdopterin guanine dinucleotide + diphosphate. In terms of biological role, transfers a GMP moiety from GTP to Mo-molybdopterin (Mo-MPT) cofactor (Moco or molybdenum cofactor) to form Mo-molybdopterin guanine dinucleotide (Mo-MGD) cofactor. The sequence is that of Molybdenum cofactor guanylyltransferase from Acinetobacter baumannii (strain ATCC 17978 / DSM 105126 / CIP 53.77 / LMG 1025 / NCDC KC755 / 5377).